The primary structure comprises 182 residues: Large ribosomal subunit protein uL5 (182 aa).

The protein belongs to the universal ribosomal protein uL5 family. Part of the 50S ribosomal subunit; part of the 5S rRNA/L5/L18/L25 subcomplex. Contacts the 5S rRNA and the P site tRNA. Forms a bridge to the 30S subunit in the 70S ribosome.

Its function is as follows. This is one of the proteins that bind and probably mediate the attachment of the 5S RNA into the large ribosomal subunit, where it forms part of the central protuberance. In the 70S ribosome it contacts protein S13 of the 30S subunit (bridge B1b), connecting the 2 subunits; this bridge is implicated in subunit movement. Contacts the P site tRNA; the 5S rRNA and some of its associated proteins might help stabilize positioning of ribosome-bound tRNAs. The protein is Large ribosomal subunit protein uL5 of Borrelia turicatae (strain 91E135).